The chain runs to 361 residues: Blue-sensitive opsin (361 aa).

The Extracellular segment spans residues 1–43 (MHPPRPTTDLPEDFYIPMALDAPNITALSPFLVPQTHLGSPGL). Asparagine 24 is a glycosylation site (N-linked (GlcNAc...) asparagine). A helical membrane pass occupies residues 44–68 (FRAMAAFMFLLIALGVPINTLTIFC). The Cytoplasmic portion of the chain corresponds to 69 to 80 (TARFRKLRSHLN). Residues 81–106 (YILVNLALANLLVILVGSTTACYSFS) form a helical membrane-spanning segment. The Extracellular portion of the chain corresponds to 107 to 120 (QMYFALGPTACKIE). Cysteine 117 and cysteine 194 form a disulfide bridge. Residues 121-140 (GFAATLGGMVSLWSLAVVAF) form a helical membrane-spanning segment. Residues 141 to 159 (ERFLVICKPLGNFTFRGSH) are Cytoplasmic-facing. A helical membrane pass occupies residues 160–183 (AVLGCVATWVLGFVASAPPLFGWS). Residues 184–209 (RYIPEGLQCSCGPDWYTTDNKWHNES) are Extracellular-facing. A helical transmembrane segment spans residues 210-237 (YVLFLFTFCFGVPLAIIVFSYGRLLITL). The Cytoplasmic portion of the chain corresponds to 238 to 259 (RAVARQQEQSATTQKADREVTK). Residues 260 to 283 (MVVVMVLGFLVCWAPYTAFALWVV) traverse the membrane as a helical segment. Topologically, residues 284-291 (THRGRSFE) are extracellular. A helical transmembrane segment spans residues 292 to 316 (VGLASIPSVFSKSSTVYNPVIYVLM). Lysine 303 is modified (N6-(retinylidene)lysine). At 317-361 (NKQFRSCMLKLLFCGRSPFGDDEDVSGSSQATQVSSVSSSHVAPA) the chain is on the cytoplasmic side. Residues 338–361 (DEDVSGSSQATQVSSVSSSHVAPA) form a disordered region. Over residues 342–361 (SGSSQATQVSSVSSSHVAPA) the composition is skewed to low complexity.

It belongs to the G-protein coupled receptor 1 family. Opsin subfamily. Phosphorylated on some or all of the serine and threonine residues present in the C-terminal region. In terms of tissue distribution, the color pigments are found in the cone photoreceptor cells.

The protein localises to the membrane. Its function is as follows. Visual pigments are the light-absorbing molecules that mediate vision. They consist of an apoprotein, opsin, covalently linked to cis-retinal. This chain is Blue-sensitive opsin, found in Gallus gallus (Chicken).